The chain runs to 380 residues: Cobalt-precorrin-5B C(1)-methyltransferase (380 aa).

The protein belongs to the CbiD family.

The catalysed reaction is Co-precorrin-5B + S-adenosyl-L-methionine = Co-precorrin-6A + S-adenosyl-L-homocysteine. The protein operates within cofactor biosynthesis; adenosylcobalamin biosynthesis; cob(II)yrinate a,c-diamide from sirohydrochlorin (anaerobic route): step 6/10. In terms of biological role, catalyzes the methylation of C-1 in cobalt-precorrin-5B to form cobalt-precorrin-6A. The protein is Cobalt-precorrin-5B C(1)-methyltransferase of Methanosphaera stadtmanae (strain ATCC 43021 / DSM 3091 / JCM 11832 / MCB-3).